The primary structure comprises 287 residues: uncharacterized protein (287 aa).

The first 20 residues, 1–20 (MKVICGSVFLFSLFFQVVLG), serve as a signal peptide directing secretion. Topologically, residues 22–201 (YFSSSSGNPN…AFYGPRRNIK (180 aa)) are extracellular. N-linked (GlcNAc...) asparagine glycosylation is found at asparagine 120, asparagine 154, and asparagine 166. The chain crosses the membrane as a helical span at residues 202 to 222 (AAIAVPSVILGLILVALVYYA). Over 223–287 (YRKDTWKIYM…YYQSQVKKFH (65 aa)) the chain is Cytoplasmic.

It localises to the membrane. This is an uncharacterized protein from Schizosaccharomyces pombe (strain 972 / ATCC 24843) (Fission yeast).